The sequence spans 422 residues: Serine--tRNA ligase (422 aa).

229-231 (TAE) provides a ligand contact to L-serine. ATP is bound at residue 260–262 (RKE). E283 is a binding site for L-serine. 347 to 350 (EISS) provides a ligand contact to ATP. Residue S383 participates in L-serine binding.

This sequence belongs to the class-II aminoacyl-tRNA synthetase family. Type-1 seryl-tRNA synthetase subfamily. Homodimer. The tRNA molecule binds across the dimer.

The protein localises to the cytoplasm. The enzyme catalyses tRNA(Ser) + L-serine + ATP = L-seryl-tRNA(Ser) + AMP + diphosphate + H(+). The catalysed reaction is tRNA(Sec) + L-serine + ATP = L-seryl-tRNA(Sec) + AMP + diphosphate + H(+). It functions in the pathway aminoacyl-tRNA biosynthesis; selenocysteinyl-tRNA(Sec) biosynthesis; L-seryl-tRNA(Sec) from L-serine and tRNA(Sec): step 1/1. Catalyzes the attachment of serine to tRNA(Ser). Is also able to aminoacylate tRNA(Sec) with serine, to form the misacylated tRNA L-seryl-tRNA(Sec), which will be further converted into selenocysteinyl-tRNA(Sec). The protein is Serine--tRNA ligase of Geotalea uraniireducens (strain Rf4) (Geobacter uraniireducens).